A 169-amino-acid polypeptide reads, in one-letter code: N5-carboxyaminoimidazole ribonucleotide mutase (169 aa).

Residues serine 16, aspartate 19, and arginine 46 each contribute to the substrate site.

The protein belongs to the AIR carboxylase family. Class I subfamily.

It catalyses the reaction 5-carboxyamino-1-(5-phospho-D-ribosyl)imidazole + H(+) = 5-amino-1-(5-phospho-D-ribosyl)imidazole-4-carboxylate. It functions in the pathway purine metabolism; IMP biosynthesis via de novo pathway; 5-amino-1-(5-phospho-D-ribosyl)imidazole-4-carboxylate from 5-amino-1-(5-phospho-D-ribosyl)imidazole (N5-CAIR route): step 2/2. In terms of biological role, catalyzes the conversion of N5-carboxyaminoimidazole ribonucleotide (N5-CAIR) to 4-carboxy-5-aminoimidazole ribonucleotide (CAIR). The polypeptide is N5-carboxyaminoimidazole ribonucleotide mutase (Escherichia coli O157:H7).